The following is a 235-amino-acid chain: tRNA pseudouridine synthase B (235 aa).

Catalysis depends on D45, which acts as the Nucleophile.

It belongs to the pseudouridine synthase TruB family. Type 1 subfamily.

It carries out the reaction uridine(55) in tRNA = pseudouridine(55) in tRNA. In terms of biological role, responsible for synthesis of pseudouridine from uracil-55 in the psi GC loop of transfer RNAs. The sequence is that of tRNA pseudouridine synthase B from Chlamydia abortus (strain DSM 27085 / S26/3) (Chlamydophila abortus).